The following is a 48-amino-acid chain: AGTAPADLTVAQLESLKEVCEANLACEHMMDVSGIIAAYTAYYGPIPY.

The region spanning 1-44 (AGTAPADLTVAQLESLKEVCEANLACEHMMDVSGIIAAYTAYYG) is the Gla domain. Residues Glu-14, Glu-18, Glu-21, and Glu-27 each coordinate Ca(2+). 4-carboxyglutamate is present on residues Glu-14, Glu-18, and Glu-21. Residues Cys-20 and Cys-26 are joined by a disulfide bond.

It belongs to the osteocalcin/matrix Gla protein family. In terms of processing, gamma-carboxyglutamate residues are formed by vitamin K dependent carboxylation by GGCX. These residues are essential for the binding of calcium.

It localises to the secreted. The protein resides in the extracellular space. The protein localises to the extracellular matrix. In terms of biological role, the carboxylated form is one of the main organic components of the bone matrix, which constitutes 1-2% of the total bone protein. The carboxylated form binds strongly to apatite and calcium. The polypeptide is Osteocalcin (bglap) (Cyprinus carpio (Common carp)).